Reading from the N-terminus, the 330-residue chain is FKBP12-interacting protein of 37 kDa (330 aa).

M1 bears the N-acetylmethionine mark. Residues 1–12 (MEFSSQDDDFGG) show a composition bias toward acidic residues. The tract at residues 1–43 (MEFSSQDDDFGGDDSAANATRASGNRRSFGDLEDDEDDIFGST) is disordered. A compositionally biased stretch (polar residues) spans 17-26 (ANATRASGNR). Positions 56 to 308 (SLRGSLKNCK…KGLEIVSELV (253 aa)) form a coiled coil.

The protein belongs to the fl(2)d family. Forms homodimers. Interacts with MTA/EMB1706. Interacts with FKBP12; interaction is inhibited by the immunosuppressive drug FK506. Interacts with VIR. Associates with MTA, MTB, VIR and HAKAI to form the m6A writer complex which is essential for adenosine methylation at specific mRNA sequences. In terms of tissue distribution, ubiquitously expressed with higher levels in primary and lateral roots, leaves, trichomes, and in pollen grains (at protein level).

It is found in the nucleus speckle. The protein localises to the nucleus. The protein resides in the nucleoplasm. In terms of biological role, probable regulatory subunit of the N6-methyltransferase complex, a multiprotein complex that mediates N6-methyladenosine (m6A) methylation at the 5'-[AG]GAC-3' consensus sites of some mRNAs. Associates with MTA, MTB, VIR and HAKAI to form the m6A writer complex which is essential for adenosine methylation at specific mRNA sequences. N6-methyladenosine (m6A) plays a role in mRNA stability, processing, translation efficiency and editing. Essential protein required during endosperm development and embryogenesis. Involved in endoreduplication, especially in trichomes. May play a role in splicing events. The polypeptide is FKBP12-interacting protein of 37 kDa (Arabidopsis thaliana (Mouse-ear cress)).